The following is a 399-amino-acid chain: Argininosuccinate synthase (399 aa).

8 to 16 (AYSGGLDTT) contacts ATP. Tyr87 contacts L-citrulline. Gly117 provides a ligand contact to ATP. L-aspartate is bound by residues Thr119, Asn123, and Asp124. Residue Asn123 coordinates L-citrulline. The L-citrulline site is built by Arg127, Ser175, Glu259, and Tyr271.

Belongs to the argininosuccinate synthase family. Type 1 subfamily. Homotetramer.

It localises to the cytoplasm. It carries out the reaction L-citrulline + L-aspartate + ATP = 2-(N(omega)-L-arginino)succinate + AMP + diphosphate + H(+). The protein operates within amino-acid biosynthesis; L-arginine biosynthesis; L-arginine from L-ornithine and carbamoyl phosphate: step 2/3. In Corynebacterium urealyticum (strain ATCC 43042 / DSM 7109), this protein is Argininosuccinate synthase.